A 360-amino-acid chain; its full sequence is Aminomethyltransferase (360 aa).

Belongs to the GcvT family. The glycine cleavage system is composed of four proteins: P, T, L and H.

The enzyme catalyses N(6)-[(R)-S(8)-aminomethyldihydrolipoyl]-L-lysyl-[protein] + (6S)-5,6,7,8-tetrahydrofolate = N(6)-[(R)-dihydrolipoyl]-L-lysyl-[protein] + (6R)-5,10-methylene-5,6,7,8-tetrahydrofolate + NH4(+). In terms of biological role, the glycine cleavage system catalyzes the degradation of glycine. This is Aminomethyltransferase from Legionella pneumophila (strain Paris).